The chain runs to 316 residues: Leucine-rich repeat-containing protein 73 (316 aa).

7 LRR repeats span residues 57–78, 86–106, 114–137, 145–166, 174–187, 202–223, and 231–250; these read SLAQ…KQLA, SIQS…ALLN, ALVA…CGLL, GLKE…SRLA, QVRV…PLGD, TLEV…TLLD, and ALRS…QQQI. The segment at 257–296 is disordered; that stretch reads GEEEEEVAGGAGDTQEWERGREPAAHQRGSSSWMCPSDPS. Residues 272 to 281 are compositionally biased toward basic and acidic residues; the sequence is EWERGREPAA. Residues 286–296 show a composition bias toward low complexity; that stretch reads SSSWMCPSDPS.

This Homo sapiens (Human) protein is Leucine-rich repeat-containing protein 73 (LRRC73).